A 247-amino-acid polypeptide reads, in one-letter code: TLC domain-containing protein 1 (247 aa).

An N-terminal signal peptide occupies residues 1-35 (MPRLLHPALPLLLGATLTFRALRRALCRLPLPVHV). Over 36–46 (RADPLRTWRWH) the chain is Extracellular. Positions 40–234 (LRTWRWHNLL…LLRSDFCPEH (195 aa)) constitute a TLC domain. Residues 47 to 67 (NLLVSFAHSIVSGIWALLCVW) traverse the membrane as a helical segment. Residues 68-83 (QTPDMLVEIETAWSLS) are Cytoplasmic-facing. The chain crosses the membrane as a helical span at residues 84–104 (GYLLVCFSAGYFIHDTVDIVA). Topologically, residues 105–123 (SGQTRASWEYLVHHVMAMG) are extracellular. Positions 124–144 (AFFSGIFWSSFVGGGVLTLLV) form an intramembrane region, helical. At 145-173 (EVSNIFLTIRMMMKISNAQDHLLYRVNKY) the chain is on the extracellular side. The helical transmembrane segment at 174 to 194 (VNLVMYFLFRLAPQAYLTHFF) threads the bilayer. Residues 195 to 201 (LRYVNQR) lie on the Cytoplasmic side of the membrane. A helical membrane pass occupies residues 202 to 222 (TLGTFLLGILLMLDVMIIIYF). Topologically, residues 223-247 (SRLLRSDFCPEHVPKKQHKDKFLTE) are extracellular.

The protein resides in the cell membrane. Functionally, regulates the composition and fluidity of the plasma membrane. Inhibits the incorporation of membrane-fluidizing phospholipids containing omega-3 long-chain polyunsaturated fatty acids (LCPUFA) and thereby promotes membrane rigidity. Does not appear to have any effect on LCPUFA synthesis. The protein is TLC domain-containing protein 1 (TLCD1) of Homo sapiens (Human).